Here is a 176-residue protein sequence, read N- to C-terminus: Flavodoxin 1 (176 aa).

A Flavodoxin-like domain is found at 4–165 (TGIFFGSDTG…RVEKWVKQVS (162 aa)).

Belongs to the flavodoxin family. FMN serves as cofactor.

In terms of biological role, low-potential electron donor to a number of redox enzymes (Potential). Involved in the reactivation of inactive cob(II)alamin in methionine synthase. This Salmonella typhimurium (strain LT2 / SGSC1412 / ATCC 700720) protein is Flavodoxin 1 (fldA).